The following is a 157-amino-acid chain: Molybdopterin synthase catalytic subunit (157 aa).

Substrate-binding positions include 103 to 104, lysine 119, and 126 to 128; these read HR and KKE.

It belongs to the MoaE family. MOCS2B subfamily. As to quaternary structure, heterotetramer; composed of 2 small (MOCS2A) and 2 large (MOCS2B) subunits.

Its subcellular location is the cytoplasm. It catalyses the reaction 2 [molybdopterin-synthase sulfur-carrier protein]-C-terminal-Gly-aminoethanethioate + cyclic pyranopterin phosphate + H2O = molybdopterin + 2 [molybdopterin-synthase sulfur-carrier protein]-C-terminal Gly-Gly + 2 H(+). Its pathway is cofactor biosynthesis; molybdopterin biosynthesis. Functionally, catalytic subunit of the molybdopterin synthase complex, a complex that catalyzes the conversion of precursor Z into molybdopterin. Acts by mediating the incorporation of 2 sulfur atoms from thiocarboxylated MOCS2A into precursor Z to generate a dithiolene group. This Culex quinquefasciatus (Southern house mosquito) protein is Molybdopterin synthase catalytic subunit.